We begin with the raw amino-acid sequence, 268 residues long: Tryptophan synthase alpha chain (268 aa).

Active-site proton acceptor residues include Glu49 and Asp60.

It belongs to the TrpA family. In terms of assembly, tetramer of two alpha and two beta chains.

It carries out the reaction (1S,2R)-1-C-(indol-3-yl)glycerol 3-phosphate + L-serine = D-glyceraldehyde 3-phosphate + L-tryptophan + H2O. It participates in amino-acid biosynthesis; L-tryptophan biosynthesis; L-tryptophan from chorismate: step 5/5. The alpha subunit is responsible for the aldol cleavage of indoleglycerol phosphate to indole and glyceraldehyde 3-phosphate. This Xylella fastidiosa (strain 9a5c) protein is Tryptophan synthase alpha chain.